A 920-amino-acid polypeptide reads, in one-letter code: Protein O-mannosyl-transferase TMTC3 (920 aa).

Residues 1–14 lie on the Cytoplasmic side of the membrane; that stretch reads MLEGKMADINFKEV. A helical membrane pass occupies residues 15–35; the sequence is TLIVSVVAACYWNSLFCGFVF. The Extracellular segment spans residues 36–94; the sequence is DDVSAILDNKDLHPSTPLKTLFQNDFWGTPMSEERSHKSYRPLTVLTFRLNYLLSELKP. The chain crosses the membrane as a helical span at residues 95–115; the sequence is MSYHLLNTVFHAVVSVIFLKV. Residues 116-125 are Cytoplasmic-facing; it reads CRLFLDKRSS. The next 2 helical transmembrane spans lie at 126-144 and 145-163; these read MIAA…AVTG and VVGR…AFLS. The Cytoplasmic portion of the chain corresponds to 164–171; the sequence is YTKSKGPD. Residues 172–192 form a helical membrane-spanning segment; that stretch reads NSIVWTPIVLTVFLVAVATLC. The Extracellular portion of the chain corresponds to 193–198; sequence KEQGIT. A helical membrane pass occupies residues 199–219; that stretch reads VVGICCVYEVFVAQGYTLPML. Residues 220–236 lie on the Cytoplasmic side of the membrane; that stretch reads CTVAGQFLRGKGSIPLS. A helical membrane pass occupies residues 237-257; that stretch reads MLQTLVKLIVLMLSTLLLVVV. Residues 258–325 lie on the Extracellular side of the membrane; that stretch reads RVQVIQSQLP…LIESFLDVRN (68 aa). A helical transmembrane segment spans residues 326 to 346; the sequence is LATFAFFCFLGALGIFSLRYP. Over 347–358 the chain is Cytoplasmic; sequence GDSSKTVLMALC. Residues 359–379 traverse the membrane as a helical segment; the sequence is LMALPFIPASNLFFPVGFVVA. Topologically, residues 380 to 381 are extracellular; the sequence is ER. A helical transmembrane segment spans residues 382–402; sequence VLYVPSMGFCILVAHGWQKIS. Residues 403 to 409 lie on the Cytoplasmic side of the membrane; it reads NKSVLKK. The chain crosses the membrane as a helical span at residues 410–428; sequence LSWVCLSMVILTHALKTLH. At 429–920 the chain is on the extracellular side; that stretch reads RNWDWESEYT…EEIERILNGE (492 aa). 9 TPR repeats span residues 451–484, 485–518, 534–567, 568–601, 602–635, 673–706, 707–740, 742–775, and 776–809; these read AKLW…QPDD, IGAH…MPQI, NVYI…RPDF, KQAY…DRNN, ADLW…NPKH, ANGY…QPDF, RSAL…YPDH, KGLI…DPSN, and VQGK…APHE. Residue Asn499 is glycosylated (N-linked (GlcNAc...) asparagine). Tyr508 is subject to Phosphotyrosine. The N-linked (GlcNAc...) asparagine glycan is linked to Asn546. The disordered stretch occupies residues 829–897; that stretch reads VEQPLAPADK…APHKTTKDIK (69 aa). Residues 840–858 show a composition bias toward basic and acidic residues; that stretch reads PGTEEREEIPSEDVKEISS. Residues 867-880 are compositionally biased toward low complexity; it reads KTNNNRNSKSNKQS. The segment covering 887 to 897 has biased composition (basic and acidic residues); the sequence is DAPHKTTKDIK.

This sequence belongs to the TMTC family.

It localises to the membrane. It is found in the endoplasmic reticulum. It carries out the reaction a di-trans,poly-cis-dolichyl beta-D-mannosyl phosphate + L-seryl-[protein] = 3-O-(alpha-D-mannosyl)-L-seryl-[protein] + a di-trans,poly-cis-dolichyl phosphate + H(+). The catalysed reaction is a di-trans,poly-cis-dolichyl beta-D-mannosyl phosphate + L-threonyl-[protein] = 3-O-(alpha-D-mannosyl)-L-threonyl-[protein] + a di-trans,poly-cis-dolichyl phosphate + H(+). The protein operates within protein modification; protein glycosylation. Functionally, transfers mannosyl residues to the hydroxyl group of serine or threonine residues. The 4 members of the TMTC family are O-mannosyl-transferases dedicated primarily to the cadherin superfamily, each member seems to have a distinct role in decorating the cadherin domains with O-linked mannose glycans at specific regions. Also acts as O-mannosyl-transferase on other proteins such as PDIA3. Involved in the positive regulation of proteasomal protein degradation in the endoplasmic reticulum (ER), and the control of ER stress response. This Mus musculus (Mouse) protein is Protein O-mannosyl-transferase TMTC3.